Consider the following 133-residue polypeptide: ATP synthase epsilon chain, chloroplastic (133 aa).

It belongs to the ATPase epsilon chain family. In terms of assembly, F-type ATPases have 2 components, CF(1) - the catalytic core - and CF(0) - the membrane proton channel. CF(1) has five subunits: alpha(3), beta(3), gamma(1), delta(1), epsilon(1). CF(0) has three main subunits: a, b and c.

Its subcellular location is the plastid. It localises to the chloroplast thylakoid membrane. Functionally, produces ATP from ADP in the presence of a proton gradient across the membrane. The sequence is that of ATP synthase epsilon chain, chloroplastic from Vitis vinifera (Grape).